Reading from the N-terminus, the 447-residue chain is MKRLILETLKAEVVPAIGCTEPIAVALACAKAREIAGVSIDEVDHVDVIVSPNVYKNGLAVGVPHTEHIGLAIAAALGLTGGKCHQGLQVLEGMKKTEQDIAVSLMDQGLISLDIKDTNEKVYIEVILSIQGWKAKVIIKERHNQFVYLEKQGHVLLDSKTVPGVIASHQNPLYHMEIKEIIAIIEQIPHEELAFMMDGVEMNKKMAMTGLQPGVGMGVGYTYYDNMKKGILSDDIMNQAMMLTAAASDARMSGSILPVMSSNGSGNNGITAILPIVAYGMKFQVEDEKMAKALAISHLMNSYIKHYIGRLSALCGCGVAAGTGASVAIAWLMGAKEQQIDGVIKNMLANVSGMICDGAKVGCALKLATSAQVAIQSALLAMDHHIVPTGNGIVAETAEGTIENLRILSEEGMQLTDHAILSVMMKFQRARESHIKDDVLTHEKYVV.

The protein belongs to the UPF0597 family.

This is UPF0597 protein Amet_4665 from Alkaliphilus metalliredigens (strain QYMF).